The chain runs to 1231 residues: Fanconi anemia group J protein homolog (1231 aa).

A Helicase ATP-binding domain is found at 11-448 (GGVKILFPCR…SDHEPLRAVC (438 aa)). Residue 46 to 53 (SPTGSGKS) participates in ATP binding. 2 disordered regions span residues 104-126 (TFSS…GASS) and 147-166 (QDDD…DEQL). Basic and acidic residues predominate over residues 152 to 166 (QTDRKRIRQSHDEQL). The Nuclear localization signal signature appears at 155-173 (RKRIRQSHDEQLQARKRRC). Residues Cys291, Cys304, Cys316, and Cys356 each coordinate [4Fe-4S] cluster. The DEAH box signature appears at 399–402 (DEAH). Residues 890 to 903 (SKNQQQRMQMSSTN) are compositionally biased toward polar residues. 3 disordered regions span residues 890–924 (SKNQ…PTSS), 936–956 (VSEF…PPEI), and 1195–1231 (GNEN…FFLD). Composition is skewed to low complexity over residues 909–924 (SQGT…PTSS) and 940–954 (TQPT…TSPP). Residues 1206-1217 (KGTEQKNRENRL) are compositionally biased toward basic and acidic residues.

Belongs to the DEAD box helicase family. DEAH subfamily. The cofactor is [4Fe-4S] cluster.

It is found in the nucleus. The catalysed reaction is Couples ATP hydrolysis with the unwinding of duplex DNA at the replication fork by translocating in the 5'-3' direction. This creates two antiparallel DNA single strands (ssDNA). The leading ssDNA polymer is the template for DNA polymerase III holoenzyme which synthesizes a continuous strand.. It carries out the reaction ATP + H2O = ADP + phosphate + H(+). Functionally, DNA-dependent helicase and 5' to 3' DNA helicase required for the maintenance of chromosomal stability. Involved in the repair of DNA double-strand breaks by homologous recombination. Involved in the repair of abasic sites at replication forks by promoting the degradation of DNA-protein cross-links: acts by catalyzing unfolding of HMCES DNA-protein cross-link via its helicase activity, exposing the underlying DNA and enabling cleavage of the DNA-protein adduct by the SPRTN metalloprotease. The protein is Fanconi anemia group J protein homolog (brip1.L) of Xenopus laevis (African clawed frog).